We begin with the raw amino-acid sequence, 517 residues long: Crotonobetaine/carnitine--CoA ligase (517 aa).

It belongs to the ATP-dependent AMP-binding enzyme family.

The enzyme catalyses 4-(trimethylamino)butanoate + ATP + CoA = 4-(trimethylamino)butanoyl-CoA + AMP + diphosphate. The catalysed reaction is crotonobetaine + ATP + CoA = crotonobetainyl-CoA + AMP + diphosphate. It catalyses the reaction (R)-carnitine + ATP + CoA = (R)-carnitinyl-CoA + AMP + diphosphate. Its pathway is amine and polyamine metabolism; carnitine metabolism. Catalyzes the transfer of CoA to carnitine, generating the initial carnitinyl-CoA needed for the CaiB reaction cycle. Also has activity toward crotonobetaine and gamma-butyrobetaine. The chain is Crotonobetaine/carnitine--CoA ligase from Salmonella typhi.